The chain runs to 414 residues: MTSAPQSVNWKRNLFVTWLGCFLTGAAFSLIMPFLPLYVEELGVSGHQSLNMWSGLVFSITFLFSAIAAPFWGSLADRKGRKIMLLRSALGMGIVMVLMGMAQNIWQFLALRALLGLLGGFIPNANALIATQVPRNKSGWALGTLSTGGVSGALIGPLIGGLLADNYGLRPVFFITAAVLFACFVMTWFYVREQFAPVLKKDMLNGRQVFNSLKNPKLILSLFVTTMIIQIATGSIAPILTLYVRELAGDIHNLAFVSGMIASVPGVAALISAPRLGKLGDKIGPERILIAMLALSVLILIPMAFVQTPLQLGILRFLLGATDGALLPAVQTLLIYNCTNQVAGRIFSYNQSFRDVGNVSGPLLGAAVSASYGFRAVFCVTAVVVLFNALYSYWCLQRQPLKAQQRAIQQRQDS.

10 consecutive transmembrane segments (helical) span residues 14 to 34 (LFVTWLGCFLTGAAFSLIMPF), 56 to 76 (LVFSITFLFSAIAAPFWGSLA), 89 to 109 (ALGMGIVMVLMGMAQNIWQFL), 113 to 133 (ALLGLLGGFIPNANALIATQV), 144 to 164 (TLSTGGVSGALIGPLIGGLLA), 171 to 191 (PVFFITAAVLFACFVMTWFYV), 219 to 239 (ILSLFVTTMIIQIATGSIAPI), 254 to 274 (LAFVSGMIASVPGVAALISAP), 288 to 308 (ILIAMLALSVLILIPMAFVQT), and 376 to 396 (AVFCVTAVVVLFNALYSYWCL).

The protein belongs to the major facilitator superfamily. DHA1 family. MdtG (TC 2.A.1.2.20) subfamily.

The protein resides in the cell inner membrane. This is Multidrug resistance protein MdtG from Yersinia enterocolitica serotype O:8 / biotype 1B (strain NCTC 13174 / 8081).